The sequence spans 604 residues: Putative ankyrin repeat protein L56 (604 aa).

13 ANK repeats span residues 77–106 (IDRY…DILV), 135–164 (FFKS…NADG), 166–189 (LSAC…YDDN), 190–219 (TIYH…EDKR), 221–247 (NVFI…KWKI), 248–277 (DVEF…DSKY), 314–341 (KFSK…NENV), 342–371 (DLRE…EFTD), 380–410 (EHIT…SRSY), 445–474 (YSQA…DIKP), 475–504 (ITNI…DITI), 505–534 (NDNR…DIRT), and 535–565 (DDDY…EPSN).

This Acanthamoeba polyphaga (Amoeba) protein is Putative ankyrin repeat protein L56.